We begin with the raw amino-acid sequence, 305 residues long: T-cell immunoglobulin and mucin domain-containing protein 2 (305 aa).

The N-terminal stretch at 1-21 (MNQIQVFISGLILLLPGAVES) is a signal peptide. Positions 22–125 (HTAVQGLAGH…AFHFVDYMLE (104 aa)) constitute an Ig-like V-type domain. The Extracellular portion of the chain corresponds to 22–231 (HTAVQGLAGH…QKPQKNLNKG (210 aa)). 3 cysteine pairs are disulfide-bonded: Cys-37–Cys-109, Cys-50–Cys-61, and Cys-56–Cys-108. Asn-86 and Asn-91 each carry an N-linked (GlcNAc...) asparagine glycan. A disordered region spans residues 130–174 (ISTSPPTRPTATGRPTTISTRSTHVPTSTRVSTSTSPTPAHTETY). Residues 131–167 (STSPPTRPTATGRPTTISTRSTHVPTSTRVSTSTSPT) are compositionally biased toward low complexity. Residues 232–252 (FYVGISIAALLILMLLSTMVI) traverse the membrane as a helical segment. Over 253–305 (TRYVVMKRKSESLSFVAFPISKIGASPKKVVERTRCEDQVYIIEDTPYPEEES) the chain is Cytoplasmic.

The protein belongs to the immunoglobulin superfamily. TIM family. As to quaternary structure, homodimer. Expressed on late differentiated Th2 cells. Expressed also on all splenic B-cells, with increased levels on germinal center B-cells, in the liver, especially in bile duct epithelial cells, and in renal tubule cells. Within retina, mainly expressed in Mueller cells.

Its subcellular location is the cell membrane. Cell surface glycoprotein that participates in iron homeostasis in the liver, the kidney, the retina and oligodendrocytes by acting as a receptor of H-ferritin. Mechanistically, mediates iron-containing ferritin uptake via an endocytic pathway, trafficking to endosomes and subsequently to lysosomes. Plays also an important role in the regulation of Th2 immunity. Receptor for SEMA4A involved in the regulation of T-cell function, enhancing T-cell activation. The polypeptide is T-cell immunoglobulin and mucin domain-containing protein 2 (Timd2) (Mus musculus (Mouse)).